The primary structure comprises 204 residues: Small ribosomal subunit protein uS4 (204 aa).

Positions Met1–Gly49 are disordered. An S4 RNA-binding domain is found at Gln94–Ile154.

It belongs to the universal ribosomal protein uS4 family. As to quaternary structure, part of the 30S ribosomal subunit. Contacts protein S5. The interaction surface between S4 and S5 is involved in control of translational fidelity.

Its function is as follows. One of the primary rRNA binding proteins, it binds directly to 16S rRNA where it nucleates assembly of the body of the 30S subunit. In terms of biological role, with S5 and S12 plays an important role in translational accuracy. The protein is Small ribosomal subunit protein uS4 of Erythrobacter litoralis (strain HTCC2594).